The sequence spans 120 residues: MNPPQGVTKTILRPGNGRDSPHTGDTVIIDYTGYLYDDTRGENEYFMGTQFDTSQGRGPLKTEIGVGKVILGWDKGVQQMTLGEKAILTISSDNGYGKRGFPGLIPPDSGLVLYVCSPAG.

Residues 1 to 24 (MNPPQGVTKTILRPGNGRDSPHTG) form a disordered region. The PPIase FKBP-type domain occupies 24–120 (GDTVIIDYTG…LVLYVCSPAG (97 aa)).

This sequence belongs to the FKBP-type PPIase family. FKBP1 subfamily.

It carries out the reaction [protein]-peptidylproline (omega=180) = [protein]-peptidylproline (omega=0). Functionally, PPIases accelerate the folding of proteins. It catalyzes the cis-trans isomerization of proline imidic peptide bonds in oligopeptides. In Emericella nidulans (strain FGSC A4 / ATCC 38163 / CBS 112.46 / NRRL 194 / M139) (Aspergillus nidulans), this protein is FK506-binding protein 1B (FKBP3).